The chain runs to 269 residues: Major pollen allergen Pha a 1 (269 aa).

The N-terminal stretch at 1-29 (MMKMVCSSSSSSLLVVAALLAVFVGSAQG) is a signal peptide. The N-linked (GlcNAc...) asparagine glycan is linked to Asn-38. Residues 67 to 173 (GGACGYKDVD…RRVKCKYPDG (107 aa)) form the Expansin-like EG45 domain. Residues 187-268 (NYLALLVKYV…GWKADTHDAS (82 aa)) form the Expansin-like CBD domain.

This sequence belongs to the expansin family. Expansin B subfamily.

The protein localises to the secreted. The sequence is that of Major pollen allergen Pha a 1 from Phalaris aquatica (Canary grass).